Here is a 93-residue protein sequence, read N- to C-terminus: YcgL domain-containing protein VSAL_I1068 (93 aa).

A YcgL domain is found at 1–84 (MYCSIYKSSK…PPENLLEKYK (84 aa)).

In Aliivibrio salmonicida (strain LFI1238) (Vibrio salmonicida (strain LFI1238)), this protein is YcgL domain-containing protein VSAL_I1068.